Reading from the N-terminus, the 335-residue chain is MFLDQITIELRAGKGGNGVVAWRKEKYLPKGGPYGGNGGVGGSIIIESATHVYSFESYRNIRFLKAEDGRPGATNNRSGKNGKDLVLIVPEGTLLRDVETKEILYDFAKSGERLVVCRGGKGGKGNTFFKTSTNRAPTKATPGKPGEIRQVELELKLIADIGLVGFPNAGKSTLFNTLARTEVKVGAYPFTTLQPVLGLVPCQEKLYQKPWIIADIPGIIEGAHQNRGLGLDFLRHIERTRLLLFVIDICGCERSSPEEDLRILMDELVHYREDLADKNRIIALNKIDDLLPDERQERLESFQKLFPSETFVLVSGLTGEGVDLLNSLFTNKLAV.

The Obg domain maps to Met1 to Ile158. In terms of domain architecture, OBG-type G spans Ala159–Ala334. Residues Gly165–Ser172, Phe190–Gln194, Asp215–Gly218, Asn285–Asp288, and Ser315–Leu317 each bind GTP. Mg(2+)-binding residues include Ser172 and Thr192.

Belongs to the TRAFAC class OBG-HflX-like GTPase superfamily. OBG GTPase family. In terms of assembly, monomer. The cofactor is Mg(2+).

It is found in the cytoplasm. An essential GTPase (4.1 pmol GTP/min). Cannot substitute endogenous obg in E.coli, has a partially dominant-negative phenotype upon overexpression in liquid culture leading to decreased growth rate in a concentration-dependent fashion, with 50% of cells being elongated. Binds GTP, GDP and possibly (p)ppGpp with moderate affinity, with high nucleotide exchange rates and a fairly low GTP hydrolysis rate. It may play a role in control of the cell cycle, stress response, ribosome biogenesis and in those bacteria that undergo differentiation, in morphogenesis control. The polypeptide is GTPase Obg (Chlamydia abortus (strain DSM 27085 / S26/3) (Chlamydophila abortus)).